We begin with the raw amino-acid sequence, 455 residues long: Cysteine--tRNA ligase (455 aa).

Cys-28 serves as a coordination point for Zn(2+). Residues Met-30–His-40 carry the 'HIGH' region motif. Residues Cys-209, His-234, and Glu-238 each coordinate Zn(2+). Residues Lys-266–Ser-270 carry the 'KMSKS' region motif. Lys-269 contributes to the ATP binding site.

The protein belongs to the class-I aminoacyl-tRNA synthetase family. Monomer. Zn(2+) is required as a cofactor.

The protein resides in the cytoplasm. The catalysed reaction is tRNA(Cys) + L-cysteine + ATP = L-cysteinyl-tRNA(Cys) + AMP + diphosphate. This chain is Cysteine--tRNA ligase, found in Methylobacillus flagellatus (strain ATCC 51484 / DSM 6875 / VKM B-1610 / KT).